The sequence spans 330 residues: Aspartate--ammonia ligase (330 aa).

It belongs to the class-II aminoacyl-tRNA synthetase family. AsnA subfamily.

The protein localises to the cytoplasm. It catalyses the reaction L-aspartate + NH4(+) + ATP = L-asparagine + AMP + diphosphate + H(+). It functions in the pathway amino-acid biosynthesis; L-asparagine biosynthesis; L-asparagine from L-aspartate (ammonia route): step 1/1. The protein is Aspartate--ammonia ligase of Streptococcus pyogenes serotype M6 (strain ATCC BAA-946 / MGAS10394).